Reading from the N-terminus, the 90-residue chain is Lectin-1 (90 aa).

Gln1 bears the Pyrrolidone carboxylic acid mark. An intrachain disulfide couples Cys46 to Cys71.

Post-translationally, the N-terminus is blocked. In terms of processing, contains seven disulfide bonds. Proteolytically cleaved. Major form may consist of cleaved, disulfide-bonded subunits.

Its function is as follows. Lectin with specificity for complex N-linked glycans and O-linked glycans. Has hemagglutinating activity towards rabbit erythrocytes that is inhibited by N-acetyl-D-galactosamine. The chain is Lectin-1 from Hypnea cervicornis (Brazilian red alga).